The sequence spans 176 residues: Sigma intracellular receptor 2 (176 aa).

At 1–9 (MGAPATRRC) the chain is on the cytoplasmic side. A helical transmembrane segment spans residues 10 to 30 (VEWLLGLYFLSHIPITLFMDL). Residues 10–158 (VEWLLGLYFL…PYLLIPFILL (149 aa)) form the EXPERA domain. Residues 31 to 68 (QAVLPRELYPVEFRNLLKWYAKEFKDPLLQEPPAWFKS) are Lumenal-facing. A helical membrane pass occupies residues 69 to 89 (FLFCELVFQLPFFPIATYAFL). Cholesterol is bound by residues Val75 and Gln77. At 90–99 (KGSCKWIRTP) the chain is on the cytoplasmic side. A helical membrane pass occupies residues 100 to 120 (AIIYSVHTMTTLIPILSTFLF). Positions 108-176 (MTTLIPILST…YKYEEKRKKK (69 aa)) are required for interaction with Hst1/HTN1. Residues 121–140 (EDFSKASGFKGQRPETLHER) lie on the Lumenal side of the membrane. The chain crosses the membrane as a helical span at residues 141-161 (LTLVSVYAPYLLIPFILLIFM). Residues 162 to 176 (LRSPYYKYEEKRKKK) lie on the Cytoplasmic side of the membrane. The short motif at 172–176 (KRKKK) is the ER retention motif element.

The protein belongs to the TMEM97/sigma-2 receptor family. As to quaternary structure, homodimer. Interacts with NPC1; the interaction impairs NPC1-mediated cholesterol transport. Interacts with PGRMC1 and LDLR; the interaction increases LDL internalization. Interacts with histatin 1/HTN1; the interaction induces HTN1-stimulating wound healing. Interacts with TSPO. Forms a complex with TSPO and PGRMC1; the interaction occurs in MIA PaCa-2 cells but not in MCF7 cells. In terms of tissue distribution, widely expressed in normal tissues. Expressed in pancreatic, renal, breast, colon, ovarian surface epithelial (OSE) cells. Highly expressed in various proliferating cancer cells.

It is found in the rough endoplasmic reticulum membrane. It localises to the nucleus membrane. Functionally, sigma-2 receptor which contributes to ameliorate dysfunctional cellular processes and slow degenerative progression by regulating cell functions including cholesterol biosynthesis/trafficking, membrane trafficking, autophagy, lipid membrane-bound protein trafficking, and receptor stabilization at the cell surface. Forms a ternary complex with PGRMC1 receptor and low density lipoprotein receptor/LDLR at the plasma membrane, which increases LDLR-mediated LDL cholesterol internalization. Decreases lysosomal sterol transporter NPC1 availability to the cell, probably through NPC1-binding, hence controlling lipid transport, including cholesterol and LBPA, outside of late endosome/lysosome. Binds regio- and stereoselective ligand 20(S)-hydroxycholesterol (20(S)-OHC) which enhances TMEM97-NPC1 interaction and decreases TMEM97-PGRMC1 and TMEM97-TSPO interactions, thereby linking OHC binding to cholesterol homeostasis. Also able to bind cholesterol. Binds histatin 1 (Hst 1)/HN1 salivary peptide at the ER membrane, which is critical for increasing mitochondria-ER contacts and stimulating Hst1 wound healing properties. May alter the activity of some cytochrome P450 proteins. Although shows homologies with sterol isomerases (EXPERA domain), not able to catalyze sterol isomerization. However, may act as sensors of these molecules. Acts as a quality control factor in the ER, promoting the proteolytic degradation of nonproductive and extramitochondrial precursor proteins in the ER membrane thus removing them from the ER surface. The polypeptide is Sigma intracellular receptor 2 (Homo sapiens (Human)).